A 131-amino-acid polypeptide reads, in one-letter code: Transcription antitermination protein NusB (131 aa).

Belongs to the NusB family.

Its function is as follows. Involved in transcription antitermination. Required for transcription of ribosomal RNA (rRNA) genes. Binds specifically to the boxA antiterminator sequence of the ribosomal RNA (rrn) operons. The protein is Transcription antitermination protein NusB of Campylobacter curvus (strain 525.92).